Here is a 64-residue protein sequence, read N- to C-terminus: UPF0434 protein Bmul_0750/BMULJ_02510 (64 aa).

It belongs to the UPF0434 family.

The sequence is that of UPF0434 protein Bmul_0750/BMULJ_02510 from Burkholderia multivorans (strain ATCC 17616 / 249).